The chain runs to 247 residues: ATP synthase subunit a, chloroplastic (247 aa).

5 helical membrane passes run 38–58 (QVLITSWVVIAILLGSATLAV), 95–115 (VPFIGTMFLFIFVSNWSGALL), 134–154 (INTTVALALLTSVAYFYAGLT), 199–219 (LVVVVLVSLVPSIVPIPVMFL), and 220–240 (GLFTSGIQALIFATLAAAYIG).

This sequence belongs to the ATPase A chain family. In terms of assembly, F-type ATPases have 2 components, CF(1) - the catalytic core - and CF(0) - the membrane proton channel. CF(1) has five subunits: alpha(3), beta(3), gamma(1), delta(1), epsilon(1). CF(0) has four main subunits: a, b, b' and c.

Its subcellular location is the plastid. It localises to the chloroplast thylakoid membrane. In terms of biological role, key component of the proton channel; it plays a direct role in the translocation of protons across the membrane. The sequence is that of ATP synthase subunit a, chloroplastic from Vitis vinifera (Grape).